The sequence spans 136 residues: MSQLVYFSSSSENTQRFIERLGLPAVRIPLNERERIQVDEPYILIVPSYGGGGTAGAVPRQVIRFLNDEHNRALLRGVIASGNRNFGEAYGRAGDVIAQKCGVPWLYRFELMGTQSDIENVRKGVTEFWQRQPQNA.

The protein belongs to the NrdI family.

Functionally, probably involved in ribonucleotide reductase function. The polypeptide is Protein NrdI (Escherichia coli (strain 55989 / EAEC)).